Here is a 625-residue protein sequence, read N- to C-terminus: Alpha-1,3-galactosidase A (625 aa).

The first 32 residues, 1-32 (MAHGCSGGAMSRFVFLGVALALLGGATSPAAA), serve as a signal peptide directing secretion. PbH1 repeat units follow at residues 342 to 364 (KGKVSITRSLFDGPHDDPINIHG), 460 to 482 (TPSVVISGNVFRNVPTRGILVTT), 483 to 505 (RKPVLITGNRFDGMSMASIYVSA), 516 to 537 (VADLTIRGNSFTRPSGPVIFVE), and 573 to 611 (VGGFAFTGNTVRRLDGADHPPYTSPLFVFHGSSGIRIAR).

Belongs to the glycosyl hydrolase 110 family. A subfamily.

It carries out the reaction Hydrolysis of terminal, non-reducing branched (1-&gt;3)-alpha-D-galactosidic residues, producing free D-galactose.. The enzyme catalyses Hydrolysis of terminal, non-reducing alpha-D-galactose residues in alpha-D-galactosides, including galactose oligosaccharides, galactomannans and galactolipids.. In terms of biological role, alpha-galactosidase that specifically removes branched alpha-1,3-linked galactose residues present in blood group B antigens. Has no activity toward linear alpha-1,3-linked galactose residues. The polypeptide is Alpha-1,3-galactosidase A (glaA) (Streptomyces avermitilis (strain ATCC 31267 / DSM 46492 / JCM 5070 / NBRC 14893 / NCIMB 12804 / NRRL 8165 / MA-4680)).